We begin with the raw amino-acid sequence, 413 residues long: 3-oxo-tetronate kinase (413 aa).

ATP contacts are provided by residues serine 254, 354–357 (GGET), and glycine 397.

It belongs to the four-carbon acid sugar kinase family.

It carries out the reaction 3-dehydro-L-erythronate + ATP = 3-dehydro-4-O-phospho-L-erythronate + ADP + H(+). It catalyses the reaction 3-dehydro-D-erythronate + ATP = 3-dehydro-4-O-phospho-D-erythronate + ADP + H(+). Its function is as follows. Catalyzes the ATP-dependent phosphorylation of 3-oxo-tetronate to 3-oxo-tetronate 4-phosphate. In Haemophilus influenzae (strain ATCC 51907 / DSM 11121 / KW20 / Rd), this protein is 3-oxo-tetronate kinase.